The sequence spans 485 residues: Glucose-6-phosphate 1-dehydrogenase (485 aa).

Residues Arg-46, 89–90 (DI), and Lys-144 contribute to the NADP(+) site. The substrate site is built by His-174, Lys-178, Glu-212, and Asp-231. The Proton acceptor role is filled by His-236. Lys-334 is a substrate binding site.

It belongs to the glucose-6-phosphate dehydrogenase family.

It catalyses the reaction D-glucose 6-phosphate + NADP(+) = 6-phospho-D-glucono-1,5-lactone + NADPH + H(+). It participates in carbohydrate degradation; pentose phosphate pathway; D-ribulose 5-phosphate from D-glucose 6-phosphate (oxidative stage): step 1/3. Its function is as follows. Catalyzes the oxidation of glucose 6-phosphate to 6-phosphogluconolactone. This Zymomonas mobilis subsp. mobilis (strain ATCC 31821 / ZM4 / CP4) protein is Glucose-6-phosphate 1-dehydrogenase.